The sequence spans 306 residues: Replication termination factor 2 (306 aa).

The tract at residues 193-276 (AKLEKKTKKP…RSIADSEESE (84 aa)) is disordered. The span at 226–240 (GKPEEASLDSREKKT) shows a compositional bias: basic and acidic residues. The segment covering 243–255 (APKSTAMNESSSG) has biased composition (polar residues). Ser-287 is modified (phosphoserine).

The protein belongs to the rtf2 family. As to quaternary structure, interacts with DDI2; probably also interacts with DDI1. Post-translationally, undergoes proteasomal degradation, via DDI1 and DDI2. Removal from stalled replisomes and degradation are required for genome stability.

It is found in the chromosome. Functionally, replication termination factor which is a component of the elongating replisome. Required for ATR pathway signaling upon DNA damage and has a positive activity during DNA replication. Might function to facilitate fork pausing at replication fork barriers like the rDNA. May be globally required to stimulate ATR signaling after the fork stalls or encounters a lesion. Interacts with nascent DNA. The chain is Replication termination factor 2 from Homo sapiens (Human).